The primary structure comprises 142 residues: Large ribosomal subunit protein uL13 (142 aa).

It belongs to the universal ribosomal protein uL13 family. In terms of assembly, part of the 50S ribosomal subunit.

Functionally, this protein is one of the early assembly proteins of the 50S ribosomal subunit, although it is not seen to bind rRNA by itself. It is important during the early stages of 50S assembly. The protein is Large ribosomal subunit protein uL13 of Janthinobacterium sp. (strain Marseille) (Minibacterium massiliensis).